The sequence spans 447 residues: Methylenetetrahydrofolate--tRNA-(uracil-5-)-methyltransferase TrmFO (447 aa).

Residue 13-18 participates in FAD binding; the sequence is GAGLAG.

It belongs to the MnmG family. TrmFO subfamily. Requires FAD as cofactor.

It is found in the cytoplasm. The catalysed reaction is uridine(54) in tRNA + (6R)-5,10-methylene-5,6,7,8-tetrahydrofolate + NADH + H(+) = 5-methyluridine(54) in tRNA + (6S)-5,6,7,8-tetrahydrofolate + NAD(+). It carries out the reaction uridine(54) in tRNA + (6R)-5,10-methylene-5,6,7,8-tetrahydrofolate + NADPH + H(+) = 5-methyluridine(54) in tRNA + (6S)-5,6,7,8-tetrahydrofolate + NADP(+). Catalyzes the folate-dependent formation of 5-methyl-uridine at position 54 (M-5-U54) in all tRNAs. In Streptococcus thermophilus (strain ATCC BAA-491 / LMD-9), this protein is Methylenetetrahydrofolate--tRNA-(uracil-5-)-methyltransferase TrmFO.